A 177-amino-acid polypeptide reads, in one-letter code: Bifunctional protein PyrR (177 aa).

A PRPP-binding motif is present at residues 99–111; that stretch reads VVLVDDVLFTGRT.

The protein belongs to the purine/pyrimidine phosphoribosyltransferase family. PyrR subfamily.

The catalysed reaction is UMP + diphosphate = 5-phospho-alpha-D-ribose 1-diphosphate + uracil. Functionally, regulates the transcription of the pyrimidine nucleotide (pyr) operon in response to exogenous pyrimidines. Also displays a weak uracil phosphoribosyltransferase activity which is not physiologically significant. This Citrifermentans bemidjiense (strain ATCC BAA-1014 / DSM 16622 / JCM 12645 / Bem) (Geobacter bemidjiensis) protein is Bifunctional protein PyrR.